The primary structure comprises 813 residues: Leucine--tRNA ligase (813 aa).

Positions 40–51 (SYPSGSKLHAGH) match the 'HIGH' region motif. Positions 572–576 (KMSKS) match the 'KMSKS' region motif. Lys575 serves as a coordination point for ATP.

Belongs to the class-I aminoacyl-tRNA synthetase family.

The protein localises to the cytoplasm. It carries out the reaction tRNA(Leu) + L-leucine + ATP = L-leucyl-tRNA(Leu) + AMP + diphosphate. This chain is Leucine--tRNA ligase, found in Clostridium botulinum (strain Langeland / NCTC 10281 / Type F).